Consider the following 503-residue polypeptide: Cytochrome P450 71B6 (503 aa).

The helical transmembrane segment at Thr10–Leu30 threads the bilayer. Residue Cys446 participates in heme binding.

It belongs to the cytochrome P450 family. Requires heme as cofactor.

The protein localises to the membrane. The polypeptide is Cytochrome P450 71B6 (CYP71B6) (Arabidopsis thaliana (Mouse-ear cress)).